The primary structure comprises 249 residues: Probable transcriptional regulatory protein Minf_0651 (249 aa).

It belongs to the TACO1 family.

It localises to the cytoplasm. This is Probable transcriptional regulatory protein Minf_0651 from Methylacidiphilum infernorum (isolate V4) (Methylokorus infernorum (strain V4)).